A 249-amino-acid polypeptide reads, in one-letter code: MAGHSKFKNIQHRKGAQDKKKAKLFASLIREISLSAKSGTDIQYNHRLRAAISAAKFNNLPKDRIEKAIAQANNKDNYENYFEITYEGIIFDGIAIIVEALTDNTNRTAANVRAIFSKYGGNLVGTGNASFLFDRLGIIKFESKASTSEKLFDAAIEIGAEDIELDEEYNVVYTPIKLFTNIIEELAQLFGYPVESYIGWRPRNTVLISDTEKAQKLIKLVNALDDDDDVQRFFGNYEFSEQIYNNSLT.

Belongs to the TACO1 family.

The protein resides in the cytoplasm. This is Probable transcriptional regulatory protein OTBS_0251 from Orientia tsutsugamushi (strain Boryong) (Rickettsia tsutsugamushi).